The sequence spans 404 residues: Probable tRNA sulfurtransferase (404 aa).

One can recognise a THUMP domain in the interval 60-165 (QPIVEALKLV…DEAAYISYEE (106 aa)). Residues 183–184 (ML), 208–209 (HF), Arg265, Gly287, and Gln296 contribute to the ATP site.

It belongs to the ThiI family.

Its subcellular location is the cytoplasm. The catalysed reaction is [ThiI sulfur-carrier protein]-S-sulfanyl-L-cysteine + a uridine in tRNA + 2 reduced [2Fe-2S]-[ferredoxin] + ATP + H(+) = [ThiI sulfur-carrier protein]-L-cysteine + a 4-thiouridine in tRNA + 2 oxidized [2Fe-2S]-[ferredoxin] + AMP + diphosphate. It carries out the reaction [ThiS sulfur-carrier protein]-C-terminal Gly-Gly-AMP + S-sulfanyl-L-cysteinyl-[cysteine desulfurase] + AH2 = [ThiS sulfur-carrier protein]-C-terminal-Gly-aminoethanethioate + L-cysteinyl-[cysteine desulfurase] + A + AMP + 2 H(+). The protein operates within cofactor biosynthesis; thiamine diphosphate biosynthesis. Functionally, catalyzes the ATP-dependent transfer of a sulfur to tRNA to produce 4-thiouridine in position 8 of tRNAs, which functions as a near-UV photosensor. Also catalyzes the transfer of sulfur to the sulfur carrier protein ThiS, forming ThiS-thiocarboxylate. This is a step in the synthesis of thiazole, in the thiamine biosynthesis pathway. The sulfur is donated as persulfide by IscS. This chain is Probable tRNA sulfurtransferase, found in Streptococcus pyogenes serotype M4 (strain MGAS10750).